A 189-amino-acid polypeptide reads, in one-letter code: Chitin synthase 1 (189 aa).

The protein belongs to the chitin synthase family. Class I subfamily.

The protein localises to the cell membrane. The enzyme catalyses [(1-&gt;4)-N-acetyl-beta-D-glucosaminyl](n) + UDP-N-acetyl-alpha-D-glucosamine = [(1-&gt;4)-N-acetyl-beta-D-glucosaminyl](n+1) + UDP + H(+). Polymerizes chitin, a structural polymer of the cell wall and septum, by transferring the sugar moiety of UDP-GlcNAc to the non-reducing end of the growing chitin polymer. The polypeptide is Chitin synthase 1 (CHS1) (Exophiala jeanselmei (Dematiaceous fungus)).